The primary structure comprises 232 residues: 7-cyano-7-deazaguanine synthase (232 aa).

Position 8–18 (8–18 (FSGGQDSTTCL)) interacts with ATP. 4 residues coordinate Zn(2+): Cys188, Cys197, Cys200, and Cys203.

This sequence belongs to the QueC family. The cofactor is Zn(2+).

The catalysed reaction is 7-carboxy-7-deazaguanine + NH4(+) + ATP = 7-cyano-7-deazaguanine + ADP + phosphate + H2O + H(+). It participates in purine metabolism; 7-cyano-7-deazaguanine biosynthesis. Its function is as follows. Catalyzes the ATP-dependent conversion of 7-carboxy-7-deazaguanine (CDG) to 7-cyano-7-deazaguanine (preQ(0)). In Buchnera aphidicola subsp. Schizaphis graminum (strain Sg), this protein is 7-cyano-7-deazaguanine synthase.